The following is a 412-amino-acid chain: Serine hydroxymethyltransferase (412 aa).

Residues Leu-120 and 124 to 126 (GHL) contribute to the (6S)-5,6,7,8-tetrahydrofolate site. At Lys-228 the chain carries N6-(pyridoxal phosphate)lysine. 353–355 (SPF) is a binding site for (6S)-5,6,7,8-tetrahydrofolate.

Belongs to the SHMT family. Homodimer. The cofactor is pyridoxal 5'-phosphate.

The protein resides in the cytoplasm. It catalyses the reaction (6R)-5,10-methylene-5,6,7,8-tetrahydrofolate + glycine + H2O = (6S)-5,6,7,8-tetrahydrofolate + L-serine. The protein operates within one-carbon metabolism; tetrahydrofolate interconversion. It participates in amino-acid biosynthesis; glycine biosynthesis; glycine from L-serine: step 1/1. In terms of biological role, catalyzes the reversible interconversion of serine and glycine with tetrahydrofolate (THF) serving as the one-carbon carrier. This reaction serves as the major source of one-carbon groups required for the biosynthesis of purines, thymidylate, methionine, and other important biomolecules. Also exhibits THF-independent aldolase activity toward beta-hydroxyamino acids, producing glycine and aldehydes, via a retro-aldol mechanism. The protein is Serine hydroxymethyltransferase of Lachnoclostridium phytofermentans (strain ATCC 700394 / DSM 18823 / ISDg) (Clostridium phytofermentans).